The primary structure comprises 114 residues: Large ribosomal subunit protein uL18 (114 aa).

The protein belongs to the universal ribosomal protein uL18 family. Part of the 50S ribosomal subunit; part of the 5S rRNA/L5/L18/L25 subcomplex. Contacts the 5S and 23S rRNAs.

Its function is as follows. This is one of the proteins that bind and probably mediate the attachment of the 5S RNA into the large ribosomal subunit, where it forms part of the central protuberance. In Porphyromonas gingivalis (strain ATCC 33277 / DSM 20709 / CIP 103683 / JCM 12257 / NCTC 11834 / 2561), this protein is Large ribosomal subunit protein uL18.